The chain runs to 67 residues: Large ribosomal subunit protein bL32 (67 aa).

A compositionally biased stretch (basic residues) spans 1–19 (MAVPKRKMSRSNTRARRSQ). The tract at residues 1-21 (MAVPKRKMSRSNTRARRSQWK) is disordered.

The protein belongs to the bacterial ribosomal protein bL32 family.

In Arthrobacter sp. (strain FB24), this protein is Large ribosomal subunit protein bL32.